The sequence spans 174 residues: MGECDQILENDLWQGYKDQGFVVTQFSDLIERVLKWARSGSLWPMTFGLACCAVEMMHTAASRYDLDRYGIMFRASPRQADVMIVAGTLTNKMAPALRRVYDQMADPKYVISMGSCANGGGYYHYSYSVVRGCDRVVPVDIYVPGCPPTAEALLYGLLCLQQKILRNGQGTWRA.

Residues Cys51, Cys52, Cys116, and Cys146 each contribute to the [4Fe-4S] cluster site.

The protein belongs to the complex I 20 kDa subunit family. In terms of assembly, NDH-1 is composed of 14 different subunits. Subunits NuoB, C, D, E, F, and G constitute the peripheral sector of the complex. [4Fe-4S] cluster serves as cofactor.

It is found in the cell inner membrane. It carries out the reaction a quinone + NADH + 5 H(+)(in) = a quinol + NAD(+) + 4 H(+)(out). In terms of biological role, NDH-1 shuttles electrons from NADH, via FMN and iron-sulfur (Fe-S) centers, to quinones in the respiratory chain. The immediate electron acceptor for the enzyme in this species is believed to be ubiquinone. Couples the redox reaction to proton translocation (for every two electrons transferred, four hydrogen ions are translocated across the cytoplasmic membrane), and thus conserves the redox energy in a proton gradient. This is NADH-quinone oxidoreductase subunit B from Anaplasma phagocytophilum (strain HZ).